The sequence spans 479 residues: Envelope glycoprotein C homolog (479 aa).

Residues 1–22 (MASLARAMLALLALYAAAIAAA) form the signal peptide. At 23-451 (PSTTTALDTT…SVSWPVVSSM (429 aa)) the chain is on the virion surface side. A disordered region spans residues 26–96 (TTALDTTPNG…RVHGDKATAH (71 aa)). An N-linked (GlcNAc...) asparagine; by host glycan is attached at N40. Residues 48–57 (PSPPPTPAPA) are compositionally biased toward pro residues. Residues 75–82 (SRRKPPRN) are HDB1. Over residues 75–87 (SRRKPPRNNNRTR) the composition is skewed to basic residues. N-linked (GlcNAc...) asparagine; by host glycosylation is present at N84. Residues 95–101 (AHGRKRI) form an HDB2 region. The cysteines at positions 103 and 120 are disulfide-linked. An HDB3 region spans residues 135–140 (YRRGRF). Residues N169, N192, N220, N228, N285, and N302 are each glycosylated (N-linked (GlcNAc...) asparagine; by host). 3 disulfide bridges follow: C256/C326, C365/C418, and C369/C392. The helical transmembrane segment at 452–472 (IVVIAGIGILAIVLVIMATCV) threads the bilayer. Over 473–479 (YYRQAGP) the chain is Cytoplasmic.

This sequence belongs to the herpesviridae glycoprotein C family. In terms of assembly, interacts with host complement component C3; this interaction inhibits host immune response by disregulating complement cascade.

It localises to the virion membrane. Essential for the initial attachment to heparan sulfate moieties of the host cell surface proteoglycans. Plays also a role in host immune evasion by inhibiting the host complement cascade activation. This chain is Envelope glycoprotein C homolog (gC), found in Suid herpesvirus 1 (strain Indiana-Funkhauser / Becker) (SuHV-1).